A 267-amino-acid chain; its full sequence is 3-methyl-2-oxobutanoate hydroxymethyltransferase (267 aa).

Residues Asp42 and Asp86 each coordinate Mg(2+). Residues Asp42–Ser43, Asp86, and Lys116 contribute to the 3-methyl-2-oxobutanoate site. Glu118 provides a ligand contact to Mg(2+). Residue Glu185 is the Proton acceptor of the active site.

It belongs to the PanB family. As to quaternary structure, homodecamer; pentamer of dimers. It depends on Mg(2+) as a cofactor.

The protein localises to the cytoplasm. It catalyses the reaction 3-methyl-2-oxobutanoate + (6R)-5,10-methylene-5,6,7,8-tetrahydrofolate + H2O = 2-dehydropantoate + (6S)-5,6,7,8-tetrahydrofolate. Its pathway is cofactor biosynthesis; (R)-pantothenate biosynthesis; (R)-pantoate from 3-methyl-2-oxobutanoate: step 1/2. Functionally, catalyzes the reversible reaction in which hydroxymethyl group from 5,10-methylenetetrahydrofolate is transferred onto alpha-ketoisovalerate to form ketopantoate. This is 3-methyl-2-oxobutanoate hydroxymethyltransferase from Parasynechococcus marenigrum (strain WH8102).